The chain runs to 427 residues: MFCYQCEQTAGGSGCTRVGVCGKNEDIASLQDTIIIGLKGIAAYAYHAGELGARDPEVDAFMHEALFTTLTNVDFDLNRHIETALKVGAMNLRVMELLDRAHVERFGAPEPTKVSTGTKAGPGILVTGHDLLDLYELLRQTEGTGINVYTHGEMLPAHAYPELKKFPHLVGNYGSAWQNQKKEFEDFPGAILGTTNCVLIPKESYRERMFTCGIAGLPGVTHIKNRDFTPVIEKAKSLPPLEEKAGGELTTGFHHQAVLKLAGQIIDAVKAGKIRHFFLVGGCDGAKPGRNYYTEFVEKVPKDCVVLTLGCGKYRFNHLDLGDIDGIPRLLDMGQCNNAYSALQVALALADAFKCSVNELPLSLVLSWFEQKAVAILLTLLHLGVRNIRIGPSLPAFLTPGVLKVLQEKYNLKPITTPEQDLKEILG.

Positions 3, 6, 15, and 21 each coordinate [4Fe-4S] cluster. The hybrid [4Fe-2O-2S] cluster site is built by histidine 129, glutamate 153, cysteine 197, cysteine 283, cysteine 311, cysteine 336, glutamate 370, and lysine 372. Cysteine 283 is subject to Cysteine persulfide.

It belongs to the HCP family. It depends on [4Fe-4S] cluster as a cofactor. Hybrid [4Fe-2O-2S] cluster is required as a cofactor.

The protein localises to the cytoplasm. The catalysed reaction is A + NH4(+) + H2O = hydroxylamine + AH2 + H(+). Its function is as follows. Catalyzes the reduction of hydroxylamine to form NH(3) and H(2)O. This Moorella thermoacetica (strain ATCC 39073 / JCM 9320) protein is Hydroxylamine reductase.